A 269-amino-acid polypeptide reads, in one-letter code: MTVPAFTVVIPARLASTRLPDKPLADIGGRPMVVRVAERAHASSAQRTVVATDAPAVAQACAAHGIEAVLTRADHPSGTDRLAEVAAQLGLADDAIVVNVQGDEPLIEPALIDEVALHLAHHADCAIATAAHPLHDSAEVFNPNVVKVVCDAAGRALYFSRAPIPWARDAWSGVPAMPAASARVPLPDMPVLRHIGLYAYRAGFLRRFPTLAAAPLEQTEALEQLRAMWHGERIAVMQTAAAPAPGVDTQADLDRVRTLWAQSMAQEGP.

Belongs to the KdsB family.

It is found in the cytoplasm. It catalyses the reaction 3-deoxy-alpha-D-manno-oct-2-ulosonate + CTP = CMP-3-deoxy-beta-D-manno-octulosonate + diphosphate. Its pathway is nucleotide-sugar biosynthesis; CMP-3-deoxy-D-manno-octulosonate biosynthesis; CMP-3-deoxy-D-manno-octulosonate from 3-deoxy-D-manno-octulosonate and CTP: step 1/1. It participates in bacterial outer membrane biogenesis; lipopolysaccharide biosynthesis. In terms of biological role, activates KDO (a required 8-carbon sugar) for incorporation into bacterial lipopolysaccharide in Gram-negative bacteria. The sequence is that of 3-deoxy-manno-octulosonate cytidylyltransferase from Cupriavidus taiwanensis (strain DSM 17343 / BCRC 17206 / CCUG 44338 / CIP 107171 / LMG 19424 / R1) (Ralstonia taiwanensis (strain LMG 19424)).